The following is a 297-amino-acid chain: uncharacterized protein (297 aa).

The 99-residue stretch at 187–285 folds into the HTH araC/xylS-type domain; sequence EKLIATLHAS…GYAPSAVLKN (99 aa). 2 consecutive DNA-binding regions (H-T-H motif) follow at residues 204–225 and 252–275; these read ADMA…LRYT and VGEV…KHKF.

This is an uncharacterized protein from Escherichia coli (strain K12).